Consider the following 216-residue polypeptide: Pyridoxine/pyridoxamine 5'-phosphate oxidase (216 aa).

Residues 63–68 (RMVLMK), 78–79 (YS), K85, and Q107 each bind FMN. K68 provides a ligand contact to substrate. Residues Y125 and R129 each coordinate substrate. Residues 142 to 143 (QS) and W187 each bind FMN. 193 to 195 (RLH) is a substrate binding site. Residue R197 coordinates FMN.

It belongs to the pyridoxamine 5'-phosphate oxidase family. In terms of assembly, homodimer. The cofactor is FMN.

It carries out the reaction pyridoxamine 5'-phosphate + O2 + H2O = pyridoxal 5'-phosphate + H2O2 + NH4(+). It catalyses the reaction pyridoxine 5'-phosphate + O2 = pyridoxal 5'-phosphate + H2O2. The protein operates within cofactor metabolism; pyridoxal 5'-phosphate salvage; pyridoxal 5'-phosphate from pyridoxamine 5'-phosphate: step 1/1. Its pathway is cofactor metabolism; pyridoxal 5'-phosphate salvage; pyridoxal 5'-phosphate from pyridoxine 5'-phosphate: step 1/1. Catalyzes the oxidation of either pyridoxine 5'-phosphate (PNP) or pyridoxamine 5'-phosphate (PMP) into pyridoxal 5'-phosphate (PLP). The chain is Pyridoxine/pyridoxamine 5'-phosphate oxidase from Bradyrhizobium sp. (strain BTAi1 / ATCC BAA-1182).